Here is a 165-residue protein sequence, read N- to C-terminus: 2-halobenzoate 1,2-dioxygenase small subunit (165 aa).

It belongs to the bacterial ring-hydroxylating dioxygenase beta subunit family. As to quaternary structure, heterohexamer of 3 large (CbdA) subunits and 3 small (CbdB) subunits. The heterohexamer is part of 2-halobenzoate dioxygenase two component enzyme system. The other component is a NADH:acceptor reductase (CdbC).

It catalyses the reaction a 2-halobenzoate + NADH + O2 + H(+) = a halide anion + catechol + CO2 + NAD(+). It functions in the pathway xenobiotic degradation; benzoate degradation via CoA ligation. In terms of biological role, component of 2-halobenzoate dioxygenase multicomponent enzyme system which catalyzes the incorporation of both atoms of molecular oxygen into 2-halobenzoate to form catechol. In Burkholderia cepacia (Pseudomonas cepacia), this protein is 2-halobenzoate 1,2-dioxygenase small subunit (cbdB).